The chain runs to 163 residues: Probable ribosome biogenesis protein RLP24 (163 aa).

The protein belongs to the eukaryotic ribosomal protein eL24 family. Associated with nucleolar and cytoplasmic pre-60S particles. At the end of biogenesis it dissociates from cytoplasmic pre-60S particles and is likely to be exchanged for its ribosomal homolog, RPL24.

It localises to the nucleus. It is found in the nucleolus. In terms of biological role, involved in the biogenesis of the 60S ribosomal subunit. Ensures the docking of GTPBP4/NOG1 to pre-60S particles. This chain is Probable ribosome biogenesis protein RLP24 (Rsl24d1), found in Mus musculus (Mouse).